A 206-amino-acid chain; its full sequence is FMN-dependent NADH:quinone oxidoreductase (206 aa).

FMN is bound by residues Ser-9, 15-17 (SVS), and 139-142 (SRGG).

The protein belongs to the azoreductase type 1 family. As to quaternary structure, homodimer. The cofactor is FMN.

It catalyses the reaction 2 a quinone + NADH + H(+) = 2 a 1,4-benzosemiquinone + NAD(+). The catalysed reaction is N,N-dimethyl-1,4-phenylenediamine + anthranilate + 2 NAD(+) = 2-(4-dimethylaminophenyl)diazenylbenzoate + 2 NADH + 2 H(+). In terms of biological role, quinone reductase that provides resistance to thiol-specific stress caused by electrophilic quinones. Functionally, also exhibits azoreductase activity. Catalyzes the reductive cleavage of the azo bond in aromatic azo compounds to the corresponding amines. This is FMN-dependent NADH:quinone oxidoreductase from Cupriavidus necator (strain ATCC 17699 / DSM 428 / KCTC 22496 / NCIMB 10442 / H16 / Stanier 337) (Ralstonia eutropha).